Consider the following 469-residue polypeptide: Melanopsin (469 aa).

The Extracellular segment spans residues 1–71 (MDSPPGPTAP…VDVPDHAHYI (71 aa)). A glycan (N-linked (GlcNAc...) asparagine) is linked at N30. A helical transmembrane segment spans residues 72–92 (LGTVILLVGLTGMLGNLTVIY). The Cytoplasmic portion of the chain corresponds to 93–106 (TFCRSRSLRTPANM). A helical membrane pass occupies residues 107 to 127 (LIINLAVSDFLMSFTQAPVFF). Residues 128–143 (ASSLYKKWLFGETGCE) lie on the Extracellular side of the membrane. A disulfide bridge connects residues C142 and C220. A helical transmembrane segment spans residues 144-164 (FYAFCGAVLGITSMITLTAIA). The Cytoplasmic portion of the chain corresponds to 165–187 (LDRYLVITRPLATIGMGSKRRTA). Residues 188–208 (LVLLGIWLYALAWSLPPFFGW) traverse the membrane as a helical segment. At 209 to 237 (SAYVPEGLLTSCSWDYVTFTPQVRAYTML) the chain is on the extracellular side. A helical transmembrane segment spans residues 238-258 (LFCFVFFLPLLVIIFCYISIF). The Cytoplasmic portion of the chain corresponds to 259–295 (RAIRETGRACEGWSESPQRRRQWHRLQSEWKMAKVAL). Residues 296-316 (IVILLFVLSWAPYSTVALVAF) form a helical membrane-spanning segment. The Extracellular segment spans residues 317–328 (AGYSHILTPYMS). The chain crosses the membrane as a helical span at residues 329–349 (SVPAVIAKASAIHNPIVYAIT). At K336 the chain carries N6-(retinylidene)lysine. Topologically, residues 350–469 (HPKYRAAIAQ…SLDLGMQDAP (120 aa)) are cytoplasmic. The disordered stretch occupies residues 409–469 (GSESEVGWTD…SLDLGMQDAP (61 aa)).

It belongs to the G-protein coupled receptor 1 family. Opsin subfamily.

The protein resides in the cell membrane. It is found in the cell projection. Its subcellular location is the axon. It localises to the dendrite. The protein localises to the perikaryon. Functionally, photoreceptor that binds cis-retinaldehydes. Contributes to pupillar reflex, photoentrainment and other non-image forming responses to light. May be involved in the optokinetic visual tracking response. May be involved in the regulation of retinal hyaloid vessel growth and regression. The protein is Melanopsin (OPN4) of Phodopus sungorus (Striped hairy-footed hamster).